We begin with the raw amino-acid sequence, 129 residues long: Histone H3 (129 aa).

A disordered region spans residues 1–36; sequence MSRTKETARAKRTITSKKSKKAPSGASGVKRSHRRW. Residues 10 to 21 are compositionally biased toward basic residues; the sequence is AKRTITSKKSKK.

This sequence belongs to the histone H3 family. The nucleosome is a histone octamer containing two molecules each of H2A, H2B, H3 and H4 assembled in one H3-H4 heterotetramer and two H2A-H2B heterodimers. The octamer wraps approximately 147 bp of DNA.

The protein localises to the nucleus. The protein resides in the chromosome. Core component of nucleosome. Nucleosomes wrap and compact DNA into chromatin, limiting DNA accessibility to the cellular machineries which require DNA as a template. Histones thereby play a central role in transcription regulation, DNA repair, DNA replication and chromosomal stability. DNA accessibility is regulated via a complex set of post-translational modifications of histones, also called histone code, and nucleosome remodeling. This is Histone H3 from Leishmania infantum.